The primary structure comprises 104 residues: UPF0213 protein VIBHAR_05350 (104 aa).

The GIY-YIG domain maps to 7–82; sequence QRWSVYLIRN…KQLTKTKKEL (76 aa).

It belongs to the UPF0213 family.

The sequence is that of UPF0213 protein VIBHAR_05350 from Vibrio campbellii (strain ATCC BAA-1116).